A 1181-amino-acid chain; its full sequence is Putative type II restriction enzyme and methyltransferase RM.MjaORFECS2P (1181 aa).

This sequence in the C-terminal section; belongs to the N(4)/N(6)-methyltransferase family.

It carries out the reaction Endonucleolytic cleavage of DNA to give specific double-stranded fragments with terminal 5'-phosphates.. The enzyme catalyses a 2'-deoxyadenosine in DNA + S-adenosyl-L-methionine = an N(6)-methyl-2'-deoxyadenosine in DNA + S-adenosyl-L-homocysteine + H(+). Probably a G subtype restriction enzyme that recognizes an undetermined sequence and cleaves at an undetermined site. Probably also acts as an alpha subtype methylase, presumably on the same sequence. In Methanocaldococcus jannaschii (strain ATCC 43067 / DSM 2661 / JAL-1 / JCM 10045 / NBRC 100440) (Methanococcus jannaschii), this protein is Putative type II restriction enzyme and methyltransferase RM.MjaORFECS2P.